A 337-amino-acid chain; its full sequence is Heme A synthase (337 aa).

The next 5 helical transmembrane spans lie at 6–26, 87–107, 119–139, 154–174, and 192–212; these read ITKWLCISCIMVIATLVIGGI, FIHRLLGRITALIYIVPLIYF, LPYIIALLLFCVQGFIGWYMV, LAFHLIIAVIIYHILFYQLIK, and LIFSGIAITVVYVQIFLGALV. Histidine 256 provides a ligand contact to heme. Transmembrane regions (helical) follow at residues 258–278, 285–305, and 308–328; these read LVGYSVFLVVVVLISCLLKIE, IAYFLMIALFMQVSTGILTLL, and VPIIIASIHQLFAIILLSIII. Histidine 316 provides a ligand contact to heme.

It belongs to the COX15/CtaA family. Type 2 subfamily. In terms of assembly, interacts with CtaB. Heme b serves as cofactor.

The protein resides in the cell membrane. It catalyses the reaction Fe(II)-heme o + 2 A + H2O = Fe(II)-heme a + 2 AH2. The protein operates within porphyrin-containing compound metabolism; heme A biosynthesis; heme A from heme O: step 1/1. Catalyzes the conversion of heme O to heme A by two successive hydroxylations of the methyl group at C8. The first hydroxylation forms heme I, the second hydroxylation results in an unstable dihydroxymethyl group, which spontaneously dehydrates, resulting in the formyl group of heme A. The protein is Heme A synthase of Rickettsia conorii (strain ATCC VR-613 / Malish 7).